The primary structure comprises 595 residues: DNA damage-binding protein CMR1 (595 aa).

A disordered region spans residues 20–79; that stretch reads ALLDSLGLDPAGASSPFGSSPAPTSNKTKPKPKPAPKKRKAAAVIAVDEGPRRRSGRIAG. The span at 29–46 shows a compositional bias: low complexity; that stretch reads PAGASSPFGSSPAPTSNK. The segment covering 47–60 has biased composition (basic residues); it reads TKPKPKPAPKKRKA. WD repeat units follow at residues 185-226, 255-297, 300-339, and 349-389; these read VTNE…MEKP, HAKN…ELFS, DEDL…RESG, and GRGA…SISS. The interval 397–429 is disordered; it reads AIEEEEEGTSTLSGQSSSLPHDTHPTRESDYST. Low complexity predominate over residues 405–415; sequence TSTLSGQSSSL. Basic and acidic residues predominate over residues 417-426; it reads HDTHPTRESD. 3 WD repeats span residues 448-487, 519-556, and 558-595; these read QHGK…SLVD, LRAQ…VGLW, and DDVT…GDHI.

Belongs to the WD repeat DDB2/WDR76 family.

Its function is as follows. DNA-binding protein that binds to both single- and double-stranded DNA. Binds preferentially to UV-damaged DNA. May be involved in DNA-metabolic processes. This chain is DNA damage-binding protein CMR1, found in Cryptococcus neoformans var. neoformans serotype D (strain B-3501A) (Filobasidiella neoformans).